We begin with the raw amino-acid sequence, 357 residues long: Putative ABC transporter ATP-binding protein MG303 (357 aa).

The 241-residue stretch at 72–312 (LFFNNISVFV…TSWLMQYGIT (241 aa)) folds into the ABC transporter domain. 107–114 (GESGSGKT) is an ATP binding site.

Belongs to the ABC transporter superfamily.

The sequence is that of Putative ABC transporter ATP-binding protein MG303 from Mycoplasma genitalium (strain ATCC 33530 / DSM 19775 / NCTC 10195 / G37) (Mycoplasmoides genitalium).